A 213-amino-acid polypeptide reads, in one-letter code: uncharacterized protein (213 aa).

Residues G53, E74, and D96 each contribute to the S-adenosyl-L-methionine site.

This sequence belongs to the methyltransferase superfamily. YrrT family.

Could be a S-adenosyl-L-methionine-dependent methyltransferase. This is an uncharacterized protein from Bacillus pumilus (strain SAFR-032).